The chain runs to 124 residues: Small ribosomal subunit protein uS12 (124 aa).

A 3-methylthioaspartic acid modification is found at Asp89.

It belongs to the universal ribosomal protein uS12 family. As to quaternary structure, part of the 30S ribosomal subunit. Contacts proteins S8 and S17. May interact with IF1 in the 30S initiation complex.

In terms of biological role, with S4 and S5 plays an important role in translational accuracy. Interacts with and stabilizes bases of the 16S rRNA that are involved in tRNA selection in the A site and with the mRNA backbone. Located at the interface of the 30S and 50S subunits, it traverses the body of the 30S subunit contacting proteins on the other side and probably holding the rRNA structure together. The combined cluster of proteins S8, S12 and S17 appears to hold together the shoulder and platform of the 30S subunit. The polypeptide is Small ribosomal subunit protein uS12 (Sodalis glossinidius (strain morsitans)).